We begin with the raw amino-acid sequence, 193 residues long: Large ribosomal subunit protein bL25 (193 aa).

This sequence belongs to the bacterial ribosomal protein bL25 family. CTC subfamily. Part of the 50S ribosomal subunit; part of the 5S rRNA/L5/L18/L25 subcomplex. Contacts the 5S rRNA. Binds to the 5S rRNA independently of L5 and L18.

This is one of the proteins that binds to the 5S RNA in the ribosome where it forms part of the central protuberance. This chain is Large ribosomal subunit protein bL25, found in Oleidesulfovibrio alaskensis (strain ATCC BAA-1058 / DSM 17464 / G20) (Desulfovibrio alaskensis).